A 164-amino-acid chain; its full sequence is NADH-quinone oxidoreductase subunit I (164 aa).

2 consecutive 4Fe-4S ferredoxin-type domains span residues 54 to 84 (LRRYPNGEERCIACKLCEAICPAQAITIEAG) and 95 to 124 (VRYDIDMVKCIYCGFCQEACPVDAIVEGPN). [4Fe-4S] cluster-binding residues include Cys-64, Cys-67, Cys-70, Cys-74, Cys-104, Cys-107, Cys-110, and Cys-114.

The protein belongs to the complex I 23 kDa subunit family. As to quaternary structure, NDH-1 is composed of 14 different subunits. Subunits NuoA, H, J, K, L, M, N constitute the membrane sector of the complex. [4Fe-4S] cluster serves as cofactor.

It localises to the cell inner membrane. The catalysed reaction is a quinone + NADH + 5 H(+)(in) = a quinol + NAD(+) + 4 H(+)(out). NDH-1 shuttles electrons from NADH, via FMN and iron-sulfur (Fe-S) centers, to quinones in the respiratory chain. The immediate electron acceptor for the enzyme in this species is believed to be ubiquinone. Couples the redox reaction to proton translocation (for every two electrons transferred, four hydrogen ions are translocated across the cytoplasmic membrane), and thus conserves the redox energy in a proton gradient. The sequence is that of NADH-quinone oxidoreductase subunit I from Mesorhizobium japonicum (strain LMG 29417 / CECT 9101 / MAFF 303099) (Mesorhizobium loti (strain MAFF 303099)).